Consider the following 354-residue polypeptide: S-adenosylmethionine:tRNA ribosyltransferase-isomerase (354 aa).

It belongs to the QueA family. In terms of assembly, monomer.

The protein localises to the cytoplasm. It catalyses the reaction 7-aminomethyl-7-carbaguanosine(34) in tRNA + S-adenosyl-L-methionine = epoxyqueuosine(34) in tRNA + adenine + L-methionine + 2 H(+). It functions in the pathway tRNA modification; tRNA-queuosine biosynthesis. Its function is as follows. Transfers and isomerizes the ribose moiety from AdoMet to the 7-aminomethyl group of 7-deazaguanine (preQ1-tRNA) to give epoxyqueuosine (oQ-tRNA). The polypeptide is S-adenosylmethionine:tRNA ribosyltransferase-isomerase (Salmonella dublin (strain CT_02021853)).